A 104-amino-acid chain; its full sequence is Large ribosomal subunit protein uL24 (104 aa).

The protein belongs to the universal ribosomal protein uL24 family. As to quaternary structure, part of the 50S ribosomal subunit.

Its function is as follows. One of two assembly initiator proteins, it binds directly to the 5'-end of the 23S rRNA, where it nucleates assembly of the 50S subunit. In terms of biological role, one of the proteins that surrounds the polypeptide exit tunnel on the outside of the subunit. The protein is Large ribosomal subunit protein uL24 of Maricaulis maris (strain MCS10) (Caulobacter maris).